Consider the following 368-residue polypeptide: Protein 5 (368 aa).

This chain is Protein 5, found in Lettuce big-vein associated virus (isolate Japan/Kagawa) (LBVaV).